The sequence spans 141 residues: Large ribosomal subunit protein uL11 (141 aa).

The protein belongs to the universal ribosomal protein uL11 family. As to quaternary structure, part of the ribosomal stalk of the 50S ribosomal subunit. Interacts with L10 and the large rRNA to form the base of the stalk. L10 forms an elongated spine to which L12 dimers bind in a sequential fashion forming a multimeric L10(L12)X complex. One or more lysine residues are methylated.

Its function is as follows. Forms part of the ribosomal stalk which helps the ribosome interact with GTP-bound translation factors. In Lactococcus lactis subsp. lactis (strain IL1403) (Streptococcus lactis), this protein is Large ribosomal subunit protein uL11.